We begin with the raw amino-acid sequence, 150 residues long: Ribosome maturation factor RimP (150 aa).

This sequence belongs to the RimP family.

The protein resides in the cytoplasm. Functionally, required for maturation of 30S ribosomal subunits. The chain is Ribosome maturation factor RimP from Francisella philomiragia subsp. philomiragia (strain ATCC 25017 / CCUG 19701 / FSC 153 / O#319-036).